A 515-amino-acid chain; its full sequence is Cytochrome P450 monooxygenase nsrP (515 aa).

Residues 20–40 (FGTAAFLAVLLSALAFLSYTP) traverse the membrane as a helical segment. 3 N-linked (GlcNAc...) asparagine glycosylation sites follow: Asn84, Asn406, and Asn411. Heme is bound at residue Cys452.

It belongs to the cytochrome P450 family. It depends on heme as a cofactor.

The protein resides in the membrane. It functions in the pathway secondary metabolite biosynthesis. Its function is as follows. Cytochrome P450 monooxygenase; part of the gene cluster that mediates the biosynthesis of the tetrahydroxanthone dimer neosartorin, which exhibits antibacterial activity. The two different monomeric units appear to be synthesized by the same set of enzymes, among which the Baeyer-Villiger monooxygenase nsrF is the key enzyme for the divergence of the biosynthetic routes. The pathway begins with the synthesis of atrochrysone thioester by the polyketide synthase nsrB. The atrochrysone carboxyl ACP thioesterase nsrC then breaks the thioester bond and releases the atrochrysone carboxylic acid from AacuL. Atrochrysone carboxylic acid is decarboxylated by the decarboxylase nsrE, and oxidized by the anthrone oxygenase nsrD to yield emodin. Emodin is then reduced to emodin hydroquinone by the oxidoreductase nsrR. A-ring reduction by the short chain dehydrogenase nsrJ, dehydration by the scytalone dehydratase-like protein nsrI and probable spontaneous re-oxidation, results in overall deoxygenation to chrysophanol. The Baeyer-Villiger monooxygenase nsrF accepts chrysophanol as a substrate to insert one oxygen atom at two different positions to yield the precursors of both monomric units. NsrF is promiscuous/flexible in interacting with the 2 (non methylated and methylated) aromatic rings of chrysophanol, thus diverging the biosynthetic pathway at this point. After the hydrolysis of the lactones, methylesterification by the methyltransferase nsrG yields respectively moniliphenone and 2,2',6'-trihydroxy-4-methyl-6-methoxya-cyldiphenylmethanone. The next steps are the hydroxylation by the FAD-dependent monooxygenase nsrK, followed by isomerization by the monooxygenase nsrQ. The short chain dehydrogenase/reductase nsrO then catalyzes the C-5 ketoreduction to give the xanthone skeleton of blennolide C and 5-acetylblennolide A. The acetyltransferase nsrL has a strict substrate specificity and uses only blennolide A but not blennolide C to yield 5-acetylblennolide A as the single-acetylated product. In the final step of the biosynthesis, the heterodimerization of the 2 xanthones, blennolide C and 5-acetylblennolide A, is catalyzed by the cytochrome P450 monooxygenase nsrP. NsrP can utilize at least three different xanthones as its substrates to perform the dimerization reaction. This is Cytochrome P450 monooxygenase nsrP from Aspergillus novofumigatus (strain IBT 16806).